A 239-amino-acid chain; its full sequence is Uridylate kinase (239 aa).

An ATP-binding site is contributed by 12-15; the sequence is KLSG. The interval 20–25 is involved in allosteric activation by GTP; that stretch reads GDQGAG. Gly54 provides a ligand contact to UMP. Residues Gly55 and Arg59 each contribute to the ATP site. Residues Asp74 and 135–142 contribute to the UMP site; that span reads TGNPFFTT. ATP is bound by residues Thr162, Tyr168, and Asp171.

Belongs to the UMP kinase family. As to quaternary structure, homohexamer.

It localises to the cytoplasm. It catalyses the reaction UMP + ATP = UDP + ADP. The protein operates within pyrimidine metabolism; CTP biosynthesis via de novo pathway; UDP from UMP (UMPK route): step 1/1. Allosterically activated by GTP. Inhibited by UTP. In terms of biological role, catalyzes the reversible phosphorylation of UMP to UDP. The protein is Uridylate kinase of Methylococcus capsulatus (strain ATCC 33009 / NCIMB 11132 / Bath).